Here is a 105-residue protein sequence, read N- to C-terminus: MSIYFPIHCPDYLRSAKMTEVMMNTQPMEEIGLSPRKDGLSYQIFPDPSDFDRCCKLKDRLPSIVVEPTEGEVESGELRWPPEEFLVQEDEQDNCEETAKENKEQ.

In terms of domain architecture, LBH spans 18-104; it reads MTEVMMNTQP…CEETAKENKE (87 aa). Position 63 is a phosphoserine (Ser-63). The span at 86–96 shows a compositional bias: acidic residues; sequence LVQEDEQDNCE. A disordered region spans residues 86 to 105; sequence LVQEDEQDNCEETAKENKEQ.

It belongs to the LBH family. In terms of tissue distribution, highly expressed in heart, and expressed at low levels in placenta, lung, skeletal muscle, kidney and liver.

It is found in the nucleus. The protein localises to the cytoplasm. In terms of biological role, transcriptional activator which may act in mitogen-activated protein kinase signaling pathway. The protein is Protein LBH of Homo sapiens (Human).